An 84-amino-acid polypeptide reads, in one-letter code: Small ribosomal subunit protein bS18 (84 aa).

Belongs to the bacterial ribosomal protein bS18 family. Part of the 30S ribosomal subunit. Forms a tight heterodimer with protein bS6.

In terms of biological role, binds as a heterodimer with protein bS6 to the central domain of the 16S rRNA, where it helps stabilize the platform of the 30S subunit. This Helicobacter hepaticus (strain ATCC 51449 / 3B1) protein is Small ribosomal subunit protein bS18.